The chain runs to 365 residues: Methylthioribose-1-phosphate isomerase (365 aa).

Residues Arg53 to Ala55, Arg90, and Gln201 contribute to the substrate site. Catalysis depends on Asp242, which acts as the Proton donor. Asn252–Lys253 contributes to the substrate binding site.

Belongs to the eIF-2B alpha/beta/delta subunits family. MtnA subfamily.

It catalyses the reaction 5-(methylsulfanyl)-alpha-D-ribose 1-phosphate = 5-(methylsulfanyl)-D-ribulose 1-phosphate. It functions in the pathway amino-acid biosynthesis; L-methionine biosynthesis via salvage pathway; L-methionine from S-methyl-5-thio-alpha-D-ribose 1-phosphate: step 1/6. Functionally, catalyzes the interconversion of methylthioribose-1-phosphate (MTR-1-P) into methylthioribulose-1-phosphate (MTRu-1-P). The sequence is that of Methylthioribose-1-phosphate isomerase from Methylorubrum populi (strain ATCC BAA-705 / NCIMB 13946 / BJ001) (Methylobacterium populi).